The sequence spans 432 residues: C4-dicarboxylate transport protein (432 aa).

8 helical membrane-spanning segments follow: residues 8-28 (ILYV…HYWP), 44-64 (LIKM…IAGM), 78-98 (LLYF…AAHL), 148-168 (GDIL…AVLG), 188-208 (IVHV…AFTI), 222-242 (LIGT…GTIA), 307-327 (IYMT…LTLM), and 355-375 (AATL…ILGI).

The protein belongs to the dicarboxylate/amino acid:cation symporter (DAACS) (TC 2.A.23) family.

It localises to the cell inner membrane. In terms of biological role, responsible for the transport of dicarboxylates such as succinate, fumarate, and malate from the periplasm across the membrane. In Cupriavidus necator (strain ATCC 17699 / DSM 428 / KCTC 22496 / NCIMB 10442 / H16 / Stanier 337) (Ralstonia eutropha), this protein is C4-dicarboxylate transport protein.